The sequence spans 600 residues: Adenine deaminase (600 aa).

This sequence belongs to the metallo-dependent hydrolases superfamily. Adenine deaminase family. It depends on Mn(2+) as a cofactor.

The enzyme catalyses adenine + H2O + H(+) = hypoxanthine + NH4(+). The sequence is that of Adenine deaminase from Chelativorans sp. (strain BNC1).